Consider the following 181-residue polypeptide: Large ribosomal subunit protein uL5 (181 aa).

It belongs to the universal ribosomal protein uL5 family. As to quaternary structure, part of the 50S ribosomal subunit; part of the 5S rRNA/L5/L18/L25 subcomplex. Contacts the 5S rRNA and the P site tRNA. Forms a bridge to the 30S subunit in the 70S ribosome.

Its function is as follows. This is one of the proteins that bind and probably mediate the attachment of the 5S RNA into the large ribosomal subunit, where it forms part of the central protuberance. In the 70S ribosome it contacts protein S13 of the 30S subunit (bridge B1b), connecting the 2 subunits; this bridge is implicated in subunit movement. Contacts the P site tRNA; the 5S rRNA and some of its associated proteins might help stabilize positioning of ribosome-bound tRNAs. The sequence is that of Large ribosomal subunit protein uL5 from Campylobacter jejuni subsp. jejuni serotype O:6 (strain 81116 / NCTC 11828).